The primary structure comprises 164 residues: Cyclic pyranopterin monophosphate synthase (164 aa).

Substrate is bound by residues 73–75 (LCH) and 111–112 (ME). Residue aspartate 126 is part of the active site.

Belongs to the MoaC family. Homohexamer; trimer of dimers.

The catalysed reaction is (8S)-3',8-cyclo-7,8-dihydroguanosine 5'-triphosphate = cyclic pyranopterin phosphate + diphosphate. It participates in cofactor biosynthesis; molybdopterin biosynthesis. Its function is as follows. Catalyzes the conversion of (8S)-3',8-cyclo-7,8-dihydroguanosine 5'-triphosphate to cyclic pyranopterin monophosphate (cPMP). The polypeptide is Cyclic pyranopterin monophosphate synthase (Herpetosiphon aurantiacus (strain ATCC 23779 / DSM 785 / 114-95)).